The primary structure comprises 451 residues: Tubulin beta-1 chain (451 aa).

Residues 1 to 4 carry the MREI motif motif; that stretch reads MREI. Residues Q11, E69, S138, G142, T143, and G144 each coordinate GTP. A Mg(2+)-binding site is contributed by E69. Phosphoserine; by CDK1 is present on S172. 2 residues coordinate GTP: N204 and N226. A disordered region spans residues 430–451; that stretch reads AGLEDSEEDVEEAEVEAEDKDH. Acidic residues predominate over residues 433–451; the sequence is EDSEEDVEEAEVEAEDKDH. S435 carries the phosphoserine modification. 5-glutamyl polyglutamate is present on E440.

Belongs to the tubulin family. Dimer of alpha and beta chains. A typical microtubule is a hollow water-filled tube with an outer diameter of 25 nm and an inner diameter of 15 nM. Alpha-beta heterodimers associate head-to-tail to form protofilaments running lengthwise along the microtubule wall with the beta-tubulin subunit facing the microtubule plus end conferring a structural polarity. Microtubules usually have 13 protofilaments but different protofilament numbers can be found in some organisms and specialized cells. Interacts with RANBP10. It depends on Mg(2+) as a cofactor. Post-translationally, some glutamate residues at the C-terminus are polyglycylated, resulting in polyglycine chains on the gamma-carboxyl group. Glycylation is mainly limited to tubulin incorporated into axonemes (cilia and flagella) whereas glutamylation is prevalent in neuronal cells, centrioles, axonemes, and the mitotic spindle. Both modifications can coexist on the same protein on adjacent residues, and lowering polyglycylation levels increases polyglutamylation, and reciprocally. Cilia and flagella glycylation is required for their stability and maintenance. Flagella glycylation controls sperm motility. In terms of processing, some glutamate residues at the C-terminus are polyglutamylated, resulting in polyglutamate chains on the gamma-carboxyl group. Polyglutamylation plays a key role in microtubule severing by spastin (SPAST). SPAST preferentially recognizes and acts on microtubules decorated with short polyglutamate tails: severing activity by SPAST increases as the number of glutamates per tubulin rises from one to eight, but decreases beyond this glutamylation threshold. Glutamylation is also involved in cilia motility. Phosphorylated on Ser-172 by CDK1 during the cell cycle, from metaphase to telophase, but not in interphase. This phosphorylation inhibits tubulin incorporation into microtubules.

It is found in the cytoplasm. Its subcellular location is the cytoskeleton. In terms of biological role, tubulin is the major constituent of microtubules, a cylinder consisting of laterally associated linear protofilaments composed of alpha- and beta-tubulin heterodimers. Microtubules grow by the addition of GTP-tubulin dimers to the microtubule end, where a stabilizing cap forms. Below the cap, tubulin dimers are in GDP-bound state, owing to GTPase activity of alpha-tubulin. The chain is Tubulin beta-1 chain (Tubb1) from Mus musculus (Mouse).